A 310-amino-acid polypeptide reads, in one-letter code: Nucleotide-binding protein BAD_0837 (310 aa).

G31–S38 is an ATP binding site. Position 82–85 (D82–S85) interacts with GTP.

It belongs to the RapZ-like family.

Its function is as follows. Displays ATPase and GTPase activities. The chain is Nucleotide-binding protein BAD_0837 from Bifidobacterium adolescentis (strain ATCC 15703 / DSM 20083 / NCTC 11814 / E194a).